We begin with the raw amino-acid sequence, 214 residues long: Large ribosomal subunit protein uL3 (214 aa).

Q151 is modified (N5-methylglutamine).

The protein belongs to the universal ribosomal protein uL3 family. Part of the 50S ribosomal subunit. Forms a cluster with proteins L14 and L19. Methylated by PrmB.

Functionally, one of the primary rRNA binding proteins, it binds directly near the 3'-end of the 23S rRNA, where it nucleates assembly of the 50S subunit. In Saccharophagus degradans (strain 2-40 / ATCC 43961 / DSM 17024), this protein is Large ribosomal subunit protein uL3.